A 130-amino-acid chain; its full sequence is MSMQDPIADMLTRIRNGQAANKVAVTMPSSKLKVAIAKVLKEEGYIEDYKIEGDTKPELELVLKYFQGKAVVESIQRVSRPSLRIYKKKDELPQVMAGLGIAVVSTSKGVMTDRAARQAGLGGEILCYVA.

It belongs to the universal ribosomal protein uS8 family. In terms of assembly, part of the 30S ribosomal subunit. Contacts proteins S5 and S12.

Its function is as follows. One of the primary rRNA binding proteins, it binds directly to 16S rRNA central domain where it helps coordinate assembly of the platform of the 30S subunit. This Photorhabdus laumondii subsp. laumondii (strain DSM 15139 / CIP 105565 / TT01) (Photorhabdus luminescens subsp. laumondii) protein is Small ribosomal subunit protein uS8.